The primary structure comprises 297 residues: MENLLSVENAILITGPTASGKSALAVELAKRHNGAVVNADSMQVYDTLRVLTARPSEEEMQGVPHHLYGHVPAWAGYSTGAWLRDVSALLPALRAAGQLPVFVGGTGLYFKALTGGLSDMPDIPEALREELRRRLVEEGTDALYAELSDVDPAMAAGLNRQDGQRIVRALEVTKATGRSIADFQGRSGPVVIDADEARKIVVLPDRAVLHARINGRFEKMLQQGAEDEVKALLALGLPAEAPVMKAIGVSQIAAMLKGEMTRDEVLEKGAAATRQYAKRQMTWFRNQMDDSWQRLTH.

Position 15 to 22 (15 to 22) interacts with ATP; it reads GPTASGKS. 17–22 lines the substrate pocket; that stretch reads TASGKS. 2 interaction with substrate tRNA regions span residues 40 to 43 and 164 to 168; these read DSMQ and QRIVR.

Belongs to the IPP transferase family. In terms of assembly, monomer. Mg(2+) serves as cofactor.

The enzyme catalyses adenosine(37) in tRNA + dimethylallyl diphosphate = N(6)-dimethylallyladenosine(37) in tRNA + diphosphate. In terms of biological role, catalyzes the transfer of a dimethylallyl group onto the adenine at position 37 in tRNAs that read codons beginning with uridine, leading to the formation of N6-(dimethylallyl)adenosine (i(6)A). The polypeptide is tRNA dimethylallyltransferase (Rhizobium etli (strain ATCC 51251 / DSM 11541 / JCM 21823 / NBRC 15573 / CFN 42)).